A 175-amino-acid polypeptide reads, in one-letter code: ATP-dependent protease subunit HslV (175 aa).

The active site involves Thr-2. Na(+) is bound by residues Gly-158, Cys-161, and Thr-164.

It belongs to the peptidase T1B family. HslV subfamily. A double ring-shaped homohexamer of HslV is capped on each side by a ring-shaped HslU homohexamer. The assembly of the HslU/HslV complex is dependent on binding of ATP.

The protein resides in the cytoplasm. It carries out the reaction ATP-dependent cleavage of peptide bonds with broad specificity.. With respect to regulation, allosterically activated by HslU binding. In terms of biological role, protease subunit of a proteasome-like degradation complex believed to be a general protein degrading machinery. This chain is ATP-dependent protease subunit HslV, found in Haemophilus influenzae (strain ATCC 51907 / DSM 11121 / KW20 / Rd).